The following is a 368-amino-acid chain: Branched-chain-amino-acid aminotransferase (368 aa).

Residue R101 participates in pyridoxal 5'-phosphate binding. Residue K204 is modified to N6-(pyridoxal phosphate)lysine. Pyridoxal 5'-phosphate-binding positions include Y209, 271–272 (IT), and T314.

It belongs to the class-IV pyridoxal-phosphate-dependent aminotransferase family. Homodimer. Pyridoxal 5'-phosphate is required as a cofactor.

The enzyme catalyses L-leucine + 2-oxoglutarate = 4-methyl-2-oxopentanoate + L-glutamate. It carries out the reaction L-isoleucine + 2-oxoglutarate = (S)-3-methyl-2-oxopentanoate + L-glutamate. The catalysed reaction is L-valine + 2-oxoglutarate = 3-methyl-2-oxobutanoate + L-glutamate. It participates in amino-acid biosynthesis; L-isoleucine biosynthesis; L-isoleucine from 2-oxobutanoate: step 4/4. Its pathway is amino-acid biosynthesis; L-leucine biosynthesis; L-leucine from 3-methyl-2-oxobutanoate: step 4/4. The protein operates within amino-acid biosynthesis; L-valine biosynthesis; L-valine from pyruvate: step 4/4. In terms of biological role, catalyzes the reversible transfers of an amino group from glutamate to the alpha-ketoacid of the respective amino acid in the final step in the biosynthesis of branchedchain amino acids. The polypeptide is Branched-chain-amino-acid aminotransferase (ilvE) (Mycobacterium tuberculosis (strain CDC 1551 / Oshkosh)).